The chain runs to 130 residues: Small ribosomal subunit protein uS11 (130 aa).

This sequence belongs to the universal ribosomal protein uS11 family. In terms of assembly, part of the 30S ribosomal subunit. Interacts with proteins S7 and S18. Binds to IF-3.

In terms of biological role, located on the platform of the 30S subunit, it bridges several disparate RNA helices of the 16S rRNA. Forms part of the Shine-Dalgarno cleft in the 70S ribosome. The sequence is that of Small ribosomal subunit protein uS11 from Microcystis aeruginosa (strain NIES-843 / IAM M-2473).